The primary structure comprises 390 residues: Homeobox protein Meis1 (390 aa).

In terms of domain architecture, MEIS N-terminal spans 108–192 (GGDVCSSESF…IDLVIDDREG (85 aa)). The segment covering 190-202 (REGGSKSDSEDIT) has biased composition (basic and acidic residues). Residues 190 to 279 (REGGSKSDSE…KKRHKKRGIF (90 aa)) are disordered. Residues 203-213 (RSANLTDQPSW) are compositionally biased toward polar residues. The segment at residues 272–334 (RHKKRGIFPK…NARRRIVQPM (63 aa)) is a DNA-binding region (homeobox; TALE-type). The segment at 299 to 329 (YPSEEQKKQLAQDTGLTILQVNNWFINARRR) is interaction with DNA. Residues 335-390 (IDQSNRAVSQGTPYNPDGQPMGGFVMDGQQHMGIRAPGPMSGMGMNMGMEGQWHYM) form a required for transcriptional activation region.

Belongs to the TALE/MEIS homeobox family. As to quaternary structure, interacts with the N-terminal region of PBX1 to form a heterodimer which binds DNA including a cAMP-responsive sequence in CYP17. Also forms heterodimers with PBX2. Forms heterotrimers with PBX1 or PBX2 and a number of HOX proteins including HOXA9, HOXD4 and HOXD9 where it acts as a non-DNA-binding partner. Also forms heterotrimers with PBX1 and HOX proteins including HOXD9 and HOXD10 where PBX1 is the non-DNA-binding partner. Heterodimer with DLX3. Heterodimer with HOXB13. As to expression, expressed at low level in normal immunohepatopoietic tissues, including the fetal liver. Expressed in a subset of myeloid leukemia cell lines, with the highest expression seen in those with a megakaryocytic-erythroid phenotype. Also expressed at high levels in the cerebellum.

The protein localises to the nucleus. Its function is as follows. Acts as a transcriptional regulator of PAX6. Acts as a transcriptional activator of PF4 in complex with PBX1 or PBX2. Required for hematopoiesis, megakaryocyte lineage development and vascular patterning. May function as a cofactor for HOXA7 and HOXA9 in the induction of myeloid leukemias. The sequence is that of Homeobox protein Meis1 (MEIS1) from Homo sapiens (Human).